Here is a 509-residue protein sequence, read N- to C-terminus: 2,3-bisphosphoglycerate-independent phosphoglycerate mutase (509 aa).

Asp-11 is a Mn(2+) binding site. Residue Tyr-35 is modified to Phosphotyrosine. Ser-61 serves as a coordination point for Mn(2+). The active-site Phosphoserine intermediate is Ser-61. Residues His-122, 152-153 (RD), Arg-184, Arg-190, 260-263 (RPDR), and Lys-335 each bind substrate. Asp-402, His-406, Asp-443, His-444, and His-461 together coordinate Mn(2+).

This sequence belongs to the BPG-independent phosphoglycerate mutase family. As to quaternary structure, monomer. The cofactor is Mn(2+).

It catalyses the reaction (2R)-2-phosphoglycerate = (2R)-3-phosphoglycerate. It participates in carbohydrate degradation; glycolysis; pyruvate from D-glyceraldehyde 3-phosphate: step 3/5. Its function is as follows. Essential for rapid growth and for sporulation. Catalyzes the interconversion of 2-phosphoglycerate and 3-phosphoglycerate. The sequence is that of 2,3-bisphosphoglycerate-independent phosphoglycerate mutase from Bacillus cereus (strain ATCC 14579 / DSM 31 / CCUG 7414 / JCM 2152 / NBRC 15305 / NCIMB 9373 / NCTC 2599 / NRRL B-3711).